A 317-amino-acid polypeptide reads, in one-letter code: MARIVFMGTPDFSVPVLQTLITEGYEVVGVVTQPDRPKGRKRVLTPPPVKVEALKHGIPVLQPEKVRLDEEIDKVLALKPDLIVTAAFGQILPKRLLDEPQFGCINVHASLLPELRGGAPIHYAILQGKKKTGVTIMYMVERLDAGDMISKVEVEIDELDNVGTLHDKLSVAGAALLKDTVPNVLSGSISPIPQNEDAATYAPNIKREQERLDWTKTGEELYNQVRGLNPWPVAYTEWNGAHLKVWEAKKVPLEVQEEAGKVIELQKEGPVIGTGNKQGLLLTGVQPAGKKKMSGEDFLRGANIEIGQKLGLMNEEK.

110–113 (SLLP) lines the (6S)-5,6,7,8-tetrahydrofolate pocket.

It belongs to the Fmt family.

It carries out the reaction L-methionyl-tRNA(fMet) + (6R)-10-formyltetrahydrofolate = N-formyl-L-methionyl-tRNA(fMet) + (6S)-5,6,7,8-tetrahydrofolate + H(+). Attaches a formyl group to the free amino group of methionyl-tRNA(fMet). The formyl group appears to play a dual role in the initiator identity of N-formylmethionyl-tRNA by promoting its recognition by IF2 and preventing the misappropriation of this tRNA by the elongation apparatus. The polypeptide is Methionyl-tRNA formyltransferase (Bacillus pumilus (strain SAFR-032)).